The chain runs to 470 residues: Glutamate--tRNA ligase 2 (470 aa).

Positions 10 to 20 (PSPTGFLHIGS) match the 'HIGH' region motif. Positions 239-243 (KLSKR) match the 'KMSKS' region motif. Residue K242 participates in ATP binding.

Belongs to the class-I aminoacyl-tRNA synthetase family. Glutamate--tRNA ligase type 1 subfamily. Monomer.

It is found in the cytoplasm. It catalyses the reaction tRNA(Glu) + L-glutamate + ATP = L-glutamyl-tRNA(Glu) + AMP + diphosphate. Functionally, catalyzes the attachment of glutamate to tRNA(Glu) in a two-step reaction: glutamate is first activated by ATP to form Glu-AMP and then transferred to the acceptor end of tRNA(Glu). The protein is Glutamate--tRNA ligase 2 of Rickettsia prowazekii (strain Madrid E).